The primary structure comprises 200 residues: Flavin prenyltransferase UbiX (200 aa).

FMN is bound by residues 15–17 (GAS), T41, 102–105 (SMGT), and R137. Y167 and K183 together coordinate dimethylallyl phosphate.

It belongs to the UbiX/PAD1 family.

The catalysed reaction is dimethylallyl phosphate + FMNH2 = prenylated FMNH2 + phosphate. In terms of biological role, flavin prenyltransferase that catalyzes the synthesis of the prenylated FMN cofactor (prenyl-FMN) for 4-hydroxy-3-polyprenylbenzoic acid decarboxylase UbiD. The prenyltransferase is metal-independent and links a dimethylallyl moiety from dimethylallyl monophosphate (DMAP) to the flavin N5 and C6 atoms of FMN. The polypeptide is Flavin prenyltransferase UbiX (Alkalihalophilus pseudofirmus (strain ATCC BAA-2126 / JCM 17055 / OF4) (Bacillus pseudofirmus)).